Reading from the N-terminus, the 134-residue chain is Profilin-3 (134 aa).

An intrachain disulfide couples cysteine 13 to cysteine 118. Positions 84-100 (AVIRGKKGSGGITIKKT) match the Involved in PIP2 interaction motif. Phosphothreonine is present on threonine 114.

The protein belongs to the profilin family. In terms of assembly, occurs in many kinds of cells as a complex with monomeric actin in a 1:1 ratio. Post-translationally, phosphorylated by MAP kinases.

It is found in the cytoplasm. Its subcellular location is the cytoskeleton. Binds to actin and affects the structure of the cytoskeleton. At high concentrations, profilin prevents the polymerization of actin, whereas it enhances it at low concentrations. The sequence is that of Profilin-3 from Olea europaea (Common olive).